We begin with the raw amino-acid sequence, 347 residues long: D-alanine--D-alanine ligase (347 aa).

An ATP-grasp domain is found at 134-332 (KLYAKDLGVK…LAQSLPKTPK (199 aa)). 161 to 216 (LIGFNFPFIVKPSNAGSSLGVNVVKEEKELIYALDSAFEYSKEVLIEPFIQGVKEY) is a binding site for ATP. Mg(2+) is bound by residues Asp288, Glu300, and Asn302.

It belongs to the D-alanine--D-alanine ligase family. The cofactor is Mg(2+). Requires Mn(2+) as cofactor.

It is found in the cytoplasm. The enzyme catalyses 2 D-alanine + ATP = D-alanyl-D-alanine + ADP + phosphate + H(+). It participates in cell wall biogenesis; peptidoglycan biosynthesis. Functionally, cell wall formation. In Helicobacter pylori (strain J99 / ATCC 700824) (Campylobacter pylori J99), this protein is D-alanine--D-alanine ligase.